The sequence spans 261 residues: Small ribosomal subunit protein uS2 (261 aa).

It belongs to the universal ribosomal protein uS2 family.

The protein is Small ribosomal subunit protein uS2 of Paracoccus denitrificans (strain Pd 1222).